Here is a 545-residue protein sequence, read N- to C-terminus: CTP synthase (545 aa).

Residues 1 to 266 are amidoligase domain; that stretch reads MTTRYIFVTG…DDLVVKRFGL (266 aa). Serine 14 contributes to the CTP binding site. Residue serine 14 participates in UTP binding. ATP contacts are provided by residues 15–20 and aspartate 72; that span reads SLGKGI. Residues aspartate 72 and glutamate 140 each coordinate Mg(2+). Residues 147 to 149, 187 to 192, and lysine 223 each bind CTP; these read DIE and KTKPTQ. UTP-binding positions include 187-192 and lysine 223; that span reads KTKPTQ. 239 to 241 contributes to the ATP binding site; the sequence is KDV. The 252-residue stretch at 291-542 folds into the Glutamine amidotransferase type-1 domain; it reads VIGMVGKYIE…IAAASAHQKR (252 aa). Position 352 (glycine 352) interacts with L-glutamine. Cysteine 379 (nucleophile; for glutamine hydrolysis) is an active-site residue. L-glutamine-binding positions include 380 to 383, glutamate 403, and arginine 470; that span reads LGMQ. Active-site residues include histidine 515 and glutamate 517.

This sequence belongs to the CTP synthase family. In terms of assembly, homotetramer.

The catalysed reaction is UTP + L-glutamine + ATP + H2O = CTP + L-glutamate + ADP + phosphate + 2 H(+). It catalyses the reaction L-glutamine + H2O = L-glutamate + NH4(+). It carries out the reaction UTP + NH4(+) + ATP = CTP + ADP + phosphate + 2 H(+). It functions in the pathway pyrimidine metabolism; CTP biosynthesis via de novo pathway; CTP from UDP: step 2/2. With respect to regulation, allosterically activated by GTP, when glutamine is the substrate; GTP has no effect on the reaction when ammonia is the substrate. The allosteric effector GTP functions by stabilizing the protein conformation that binds the tetrahedral intermediate(s) formed during glutamine hydrolysis. Inhibited by the product CTP, via allosteric rather than competitive inhibition. Functionally, catalyzes the ATP-dependent amination of UTP to CTP with either L-glutamine or ammonia as the source of nitrogen. Regulates intracellular CTP levels through interactions with the four ribonucleotide triphosphates. This Shewanella baltica (strain OS223) protein is CTP synthase.